A 208-amino-acid chain; its full sequence is Protein GrpE (208 aa).

A compositionally biased stretch (basic and acidic residues) spans 1–27 (MERMNQSRKVPIHDAAEESSAEAHETQ). Residues 1–65 (MERMNQSRKV…AEEAQEEEAA (65 aa)) form a disordered region. The span at 45 to 64 (MAEEAVEQAQDAEEAQEEEA) shows a compositional bias: acidic residues.

The protein belongs to the GrpE family. Homodimer.

The protein localises to the cytoplasm. Its function is as follows. Participates actively in the response to hyperosmotic and heat shock by preventing the aggregation of stress-denatured proteins, in association with DnaK and GrpE. It is the nucleotide exchange factor for DnaK and may function as a thermosensor. Unfolded proteins bind initially to DnaJ; upon interaction with the DnaJ-bound protein, DnaK hydrolyzes its bound ATP, resulting in the formation of a stable complex. GrpE releases ADP from DnaK; ATP binding to DnaK triggers the release of the substrate protein, thus completing the reaction cycle. Several rounds of ATP-dependent interactions between DnaJ, DnaK and GrpE are required for fully efficient folding. The polypeptide is Protein GrpE (Desulfatibacillum aliphaticivorans).